We begin with the raw amino-acid sequence, 304 residues long: ULP1-interacting protein 4 (304 aa).

Positions 72-269 (DEYPKEVDEH…SIVKEGDANT (198 aa)) are disordered. Over residues 73–83 (EYPKEVDEHSN) the composition is skewed to basic and acidic residues. Residues 129–149 (TPSLKGNVTFPSPKTAISQDG) are compositionally biased toward polar residues. Ser-140 carries the post-translational modification Phosphoserine. The segment covering 155-183 (ETTRKERKYEHAPLNEVPVERDPKEENKE) has biased composition (basic and acidic residues). Phosphoserine occurs at positions 185 and 205.

In terms of assembly, interacts with ULP1.

It localises to the endoplasmic reticulum membrane. The protein resides in the mitochondrion outer membrane. Its subcellular location is the nucleus envelope. The sequence is that of ULP1-interacting protein 4 (UIP4) from Saccharomyces cerevisiae (strain ATCC 204508 / S288c) (Baker's yeast).